We begin with the raw amino-acid sequence, 585 residues long: Arginine--tRNA ligase (585 aa).

Positions 126–136 (PNIAKEMHVGH) match the 'HIGH' region motif.

It belongs to the class-I aminoacyl-tRNA synthetase family. Monomer.

It is found in the cytoplasm. It catalyses the reaction tRNA(Arg) + L-arginine + ATP = L-arginyl-tRNA(Arg) + AMP + diphosphate. In Cyanothece sp. (strain PCC 7425 / ATCC 29141), this protein is Arginine--tRNA ligase.